Here is a 268-residue protein sequence, read N- to C-terminus: Phosphatidylglycerol--prolipoprotein diacylglyceryl transferase (268 aa).

7 helical membrane-spanning segments follow: residues 14-34 (IIFS…LIGF), 60-80 (LLFN…VLFY), 95-115 (VWEG…AMLV), 124-144 (FWVV…MGRI), 176-196 (SQLY…NWFI), 203-223 (GSVA…VEFF), and 238-258 (ISMG…FIVL). Position 143 (Arg-143) interacts with a 1,2-diacyl-sn-glycero-3-phospho-(1'-sn-glycerol).

The protein belongs to the Lgt family.

It localises to the cell inner membrane. The catalysed reaction is L-cysteinyl-[prolipoprotein] + a 1,2-diacyl-sn-glycero-3-phospho-(1'-sn-glycerol) = an S-1,2-diacyl-sn-glyceryl-L-cysteinyl-[prolipoprotein] + sn-glycerol 1-phosphate + H(+). Its pathway is protein modification; lipoprotein biosynthesis (diacylglyceryl transfer). Functionally, catalyzes the transfer of the diacylglyceryl group from phosphatidylglycerol to the sulfhydryl group of the N-terminal cysteine of a prolipoprotein, the first step in the formation of mature lipoproteins. The sequence is that of Phosphatidylglycerol--prolipoprotein diacylglyceryl transferase from Mannheimia succiniciproducens (strain KCTC 0769BP / MBEL55E).